Reading from the N-terminus, the 403-residue chain is ATP phosphoribosyltransferase regulatory subunit (403 aa).

It belongs to the class-II aminoacyl-tRNA synthetase family. HisZ subfamily. Heteromultimer composed of HisG and HisZ subunits.

Its subcellular location is the cytoplasm. It functions in the pathway amino-acid biosynthesis; L-histidine biosynthesis; L-histidine from 5-phospho-alpha-D-ribose 1-diphosphate: step 1/9. Required for the first step of histidine biosynthesis. May allow the feedback regulation of ATP phosphoribosyltransferase activity by histidine. The chain is ATP phosphoribosyltransferase regulatory subunit from Crocosphaera subtropica (strain ATCC 51142 / BH68) (Cyanothece sp. (strain ATCC 51142)).